A 272-amino-acid chain; its full sequence is Transcription factor GAL1 (272 aa).

Over residues 1-10 the composition is skewed to polar residues; that stretch reads MAGKNMSSRL. Disordered stretches follow at residues 1–49, 102–215, and 246–272; these read MAGK…SPET, YGAI…SRDI, and KGHL…AMDY. 2 stretches are compositionally biased toward acidic residues: residues 113-122 and 152-174; these read ESDDDQDEEQ and SEQD…DEAE. Positions 175 to 215 are enriched in basic and acidic residues; sequence LLIKAERKEAAAKLRAERKAQRKADEVKSKQMAERRRSRDI. The CCHC-type zinc-finger motif lies at 240-255; it reads CHVCGQKGHLQKDCPD.

The protein localises to the nucleus. Its function is as follows. Transcription factor; part of the gene cluster that mediates the biosynthesis of liamocins, glycolipids (also called heavy oils) composed of a single mannitol or arabitol headgroup linked to either three, four or even six 3,5-dihydroxydecanoic ester tail-groups. Positively regulates the expression of PKS1 and EST1 that mediate the biosynthesis of liamocins. The protein is Transcription factor GAL1 of Aureobasidium melanogenum (Aureobasidium pullulans var. melanogenum).